A 585-amino-acid polypeptide reads, in one-letter code: MITQTELDNCLQWAQNNGAFIDPKISFRITEDAGVSAFVNEKFSPKPDQALIRVPETLLITSQQALSEFSQAANERSLLNSVTQLYLSKLKFGTDAVHLKSFYKPYLDVLPLHLPQPYFWSTDEVMNLHGTDVYLTMRDTLNKLVKEWRMLFQALSIEHSSQDKQFLSLFQENKDSAVVPLEQFCAHINGCKLEDSEWNSFVAYLWSYCIFNSRAFPRVILGRAGTDRTNLNEGFLYPIVDLLNHKNDVPVRWEMNEQNELCFMSQTTTFSAQDELFNNYGNISNEKCLLNYGFWDSSNKFDFSRLTLKLPSTLVSGLPVDFNKSGNFVTDDGETTILQFSLKISEPLPPVLLALFAYLSKLKSEETPTVRSVLEGIDQLTSVVSQRLLFYKNFKIKTSSTQKLRPHVIKLIKLYYQDNKKILNATTEKLSVLQKKIYSNNKEFSLSFKTIFKNDKIFANSLLLVFGAINYEDLITKDCLNDALLLWIVKLINDKSNNQGGFIKQTFKEVSDSIVIEKEDVMEFLPFYKKYFPNLSERIPEIYSVGDWGIRQFIVADTAIDRLVWIRKSNKEPIFLMKKAYDLQI.

The SET domain occupies 23-281 (PKISFRITED…AQDELFNNYG (259 aa)). Tyr-280 is an S-adenosyl-L-methionine binding site.

The protein belongs to the class V-like SAM-binding methyltransferase superfamily. RKM1 family.

Its subcellular location is the cytoplasm. Functionally, S-adenosyl-L-methionine-dependent protein-lysine N-methyltransferase that monomethylates elongation factor 1-alpha (TEF1/TEF2) at 'Lys-30'. This chain is Protein-lysine N-methyltransferase EFM1, found in Saccharomyces cerevisiae (strain ATCC 204508 / S288c) (Baker's yeast).